The following is a 440-amino-acid chain: Tripartite motif-containing protein 14 (440 aa).

The B box-type zinc finger occupies 17 to 59 (AYGWRCPEHSERPAELFCRRCGRCVCALCPVLGAHRGHPVGLA). Zn(2+)-binding residues include Cys22, His25, Cys45, and His51. In terms of domain architecture, B30.2/SPRY spans 247–440 (ALLKTSPSPE…EGPISIPRLP (194 aa)).

This sequence belongs to the TRIM/RBCC family. Interacts with MAVS. Interacts with WRNIP1 and PPP6C; these interactions positively regulate the RIG-I signaling pathway. Interacts with CGAS; this interaction stabilizes CGAS and promotes type I interferon production. Interacts with USP14; this interaction mediates the cleavage of 'Lys-48'-linked ubiquitination of CGAS. Interacts with TBK1. Interacts with SPI1. Interacts with KDM4D and USP14. Ubiquitinated. Undergoes 'Lys-63'-linked polyubiquitination; this modification allows IKBKG/NEMO recruitment to MAVS. Undergoes 'Lys-48'-linked polyubiquitination by RNF125; this modification mediates its degradation via the ubiquitin-proteasome pathway. Expressed with high level in spleen, thymus, liver and testis. Expressed with low level in the brain, kidney, and skeletal muscle. Expressed in various differentiation stages of B-lymphocytes.

It is found in the mitochondrion outer membrane. It localises to the cytoplasmic vesicle. The protein localises to the phagosome. Its function is as follows. Plays a role in the innate immune defense against viruses. Facilitates the type I IFN response by interacting with MAVS at the outer mitochondria membrane and thereby recruiting NF-kappa-B essential modulator IKBKG/NEMO to the MAVS signalosome, leading to the activation of both the IFN regulatory factor 3/IRF3 and NF-kappa-B pathways. Positively regulates the CGAS-induced type I interferon signaling pathway by stabilizing CGAS and inhibiting its autophagic degradation. Inhibits the transcriptional activity of SPI1 in a dose-dependent manner. Also inhibits OPTN-mediated selective autophagic degradation of KDM4D and thereby negatively regulates H3K9me2 and H3K9me3. Mechanistically, recruits USP14 to remove the 'Lys-63'-linked ubiquitination of KDM4D, preventing its recognition by OPTN and subsequent degradation. Plays an essential role in the innate immune defense against viruses and bacteria. Facilitates the type I IFN response by interacting with MAVS at the outer mitochondria membrane and thereby recruiting NF-kappa-B essential modulator IKBKG/NEMO to the MAVS signalosome, leading to the activation of both the IFN regulatory factor 3/IRF3 and NF-kappa-B pathways. Positively regulates the CGAS-induced type I interferon signaling pathway by stabilizing CGAS and inhibiting its autophagic degradation. Acts as a scaffold between TBK1 and STAT3 to promote phosphorylation of STAT3 and resolve interferon-stimulated gene (ISG) expression. Inhibits the transcriptional activity of SPI1 in a dose-dependent manner. The chain is Tripartite motif-containing protein 14 (Trim14) from Mus musculus (Mouse).